An 805-amino-acid chain; its full sequence is Acetyl-CoA decarbonylase/synthase complex subunit alpha 2 (805 aa).

Residues Cys-72, Cys-75, Cys-76, Cys-78, Cys-83, and Cys-93 each coordinate [4Fe-4S] cluster. His-116 contacts CO. Residues His-249, Cys-277, and Cys-322 each contribute to the [Ni-4Fe-4S] cluster site. 2 consecutive 4Fe-4S ferredoxin-type domains span residues 407 to 435 (EEFKVYIDKCVKCGECMLACPEELDIPEA) and 445 to 474 (EYLEALHDVCIGCRRCEQVCKKEIPILNVL). [4Fe-4S] cluster-binding residues include Cys-416, Cys-419, Cys-422, Cys-426, Cys-454, Cys-457, Cys-460, and Cys-464. The [Ni-4Fe-4S] cluster site is built by Cys-522, Cys-551, and Cys-586.

Belongs to the Ni-containing carbon monoxide dehydrogenase family. In terms of assembly, heterotetramer of two alpha and two epsilon subunits. The ACDS complex is made up of alpha, epsilon, beta, gamma and delta subunits with a probable stoichiometry of (alpha(2)epsilon(2))(4)-beta(8)-(gamma(1)delta(1))(8). [4Fe-4S] cluster is required as a cofactor. Requires [Ni-4Fe-4S] cluster as cofactor.

The enzyme catalyses CO + 2 oxidized [2Fe-2S]-[ferredoxin] + H2O = 2 reduced [2Fe-2S]-[ferredoxin] + CO2 + 2 H(+). It participates in one-carbon metabolism; methanogenesis from acetate. Part of the ACDS complex that catalyzes the reversible cleavage of acetyl-CoA, allowing growth on acetate as sole source of carbon and energy. The alpha-epsilon subcomponent functions as a carbon monoxide dehydrogenase. The polypeptide is Acetyl-CoA decarbonylase/synthase complex subunit alpha 2 (Methanosarcina acetivorans (strain ATCC 35395 / DSM 2834 / JCM 12185 / C2A)).